The chain runs to 157 residues: Endoribonuclease YbeY (157 aa).

The Zn(2+) site is built by His118, His122, and His128.

The protein belongs to the endoribonuclease YbeY family. Zn(2+) serves as cofactor.

The protein resides in the cytoplasm. Its function is as follows. Single strand-specific metallo-endoribonuclease involved in late-stage 70S ribosome quality control and in maturation of the 3' terminus of the 16S rRNA. The protein is Endoribonuclease YbeY of Bordetella parapertussis (strain 12822 / ATCC BAA-587 / NCTC 13253).